Here is a 473-residue protein sequence, read N- to C-terminus: Catalase easC (473 aa).

The segment covering 1 to 15 (MASEVSVASSGSEHS) has biased composition (low complexity). Residues 1 to 31 (MASEVSVASSGSEHSGAQKCPFQDPGLSSMD) are disordered. The active site involves His54. Tyr344 contacts heme. A disordered region spans residues 369–388 (DGARPEKAEMAPQKVPSQEH).

It belongs to the catalase family. Requires heme as cofactor.

Its pathway is alkaloid biosynthesis; ergot alkaloid biosynthesis. Catalase; part of the gene cluster that mediates the biosynthesis of fungal ergot alkaloid. DmaW catalyzes the first step of ergot alkaloid biosynthesis by condensing dimethylallyl diphosphate (DMAP) and tryptophan to form 4-dimethylallyl-L-tryptophan. The second step is catalyzed by the methyltransferase easF that methylates 4-dimethylallyl-L-tryptophan in the presence of S-adenosyl-L-methionine, resulting in the formation of 4-dimethylallyl-L-abrine. The catalase easC and the FAD-dependent oxidoreductase easE then transform 4-dimethylallyl-L-abrine to chanoclavine-I which is further oxidized by easD in the presence of NAD(+), resulting in the formation of chanoclavine-I aldehyde. Agroclavine dehydrogenase easG then mediates the conversion of chanoclavine-I aldehyde to agroclavine via a non-enzymatic adduct reaction: the substrate is an iminium intermediate that is formed spontaneously from chanoclavine-I aldehyde in the presence of glutathione. The presence of easA is not required to complete this reaction. Further conversion of agroclavine to paspalic acid is a two-step process involving oxidation of agroclavine to elymoclavine and of elymoclavine to paspalic acid, the second step being performed by the elymoclavine oxidase cloA. Paspalic acid is then further converted to D-lysergic acid. Ergopeptines are assembled from D-lysergic acid and three different amino acids by the D-lysergyl-peptide-synthetases composed each of a monomudular and a trimodular nonribosomal peptide synthetase subunit. LpsB and lpsC encode the monomodular subunits responsible for D-lysergic acid activation and incorporation into the ergopeptine backbone. LpsA1 and A2 subunits encode the trimodular nonribosomal peptide synthetase assembling the tripeptide portion of ergopeptines. LpsA1 is responsible for formation of the major ergopeptine, ergotamine, and lpsA2 for alpha-ergocryptine, the minor ergopeptine of the total alkaloid mixture elaborated by C.purpurea. D-lysergyl-tripeptides are assembled by the nonribosomal peptide synthetases and released as N-(D-lysergyl-aminoacyl)-lactams. Cyclolization of the D-lysergyl-tripeptides is performed by the Fe(2+)/2-ketoglutarate-dependent dioxygenase easH which introduces a hydroxyl group into N-(D-lysergyl-aminoacyl)-lactam at alpha-C of the aminoacyl residue followed by spontaneous condensation with the terminal lactam carbonyl group. This Claviceps purpurea (Ergot fungus) protein is Catalase easC.